The chain runs to 659 residues: tRNA-guanine(15) transglycosylase (659 aa).

Asp-84 (nucleophile) is an active-site residue. Positions 119 and 190 each coordinate substrate. Zn(2+) contacts are provided by Cys-273, Cys-275, and Cys-278. In terms of domain architecture, PUA spans 583 to 658; sequence KNRVVVNKDS…QAIKTRKGMK (76 aa).

This sequence belongs to the archaeosine tRNA-ribosyltransferase family. Zn(2+) is required as a cofactor.

It catalyses the reaction guanosine(15) in tRNA + 7-cyano-7-deazaguanine = 7-cyano-7-carbaguanosine(15) in tRNA + guanine. It participates in tRNA modification; archaeosine-tRNA biosynthesis. Its function is as follows. Exchanges the guanine residue with 7-cyano-7-deazaguanine (preQ0) at position 15 in the dihydrouridine loop (D-loop) of archaeal tRNAs. The chain is tRNA-guanine(15) transglycosylase from Methanobrevibacter smithii (strain ATCC 35061 / DSM 861 / OCM 144 / PS).